Here is a 37-residue protein sequence, read N- to C-terminus: Large ribosomal subunit protein bL36 (37 aa).

The protein belongs to the bacterial ribosomal protein bL36 family.

The sequence is that of Large ribosomal subunit protein bL36 from Helicobacter pylori (strain HPAG1).